The sequence spans 227 residues: ATP-dependent Clp protease proteolytic subunit (227 aa).

Ser123 functions as the Nucleophile in the catalytic mechanism. His148 is a catalytic residue.

Belongs to the peptidase S14 family. As to quaternary structure, fourteen ClpP subunits assemble into 2 heptameric rings which stack back to back to give a disk-like structure with a central cavity, resembling the structure of eukaryotic proteasomes.

The protein localises to the cytoplasm. The catalysed reaction is Hydrolysis of proteins to small peptides in the presence of ATP and magnesium. alpha-casein is the usual test substrate. In the absence of ATP, only oligopeptides shorter than five residues are hydrolyzed (such as succinyl-Leu-Tyr-|-NHMec, and Leu-Tyr-Leu-|-Tyr-Trp, in which cleavage of the -Tyr-|-Leu- and -Tyr-|-Trp bonds also occurs).. Cleaves peptides in various proteins in a process that requires ATP hydrolysis. Has a chymotrypsin-like activity. Plays a major role in the degradation of misfolded proteins. The protein is ATP-dependent Clp protease proteolytic subunit of Chlorobium phaeobacteroides (strain DSM 266 / SMG 266 / 2430).